Consider the following 256-residue polypeptide: Thiazole synthase (256 aa).

The Schiff-base intermediate with DXP role is filled by lysine 95. Residues glycine 156, alanine 182 to glycine 183, and asparagine 204 to threonine 205 each bind 1-deoxy-D-xylulose 5-phosphate.

This sequence belongs to the ThiG family. In terms of assembly, homotetramer. Forms heterodimers with either ThiH or ThiS.

Its subcellular location is the cytoplasm. It catalyses the reaction [ThiS sulfur-carrier protein]-C-terminal-Gly-aminoethanethioate + 2-iminoacetate + 1-deoxy-D-xylulose 5-phosphate = [ThiS sulfur-carrier protein]-C-terminal Gly-Gly + 2-[(2R,5Z)-2-carboxy-4-methylthiazol-5(2H)-ylidene]ethyl phosphate + 2 H2O + H(+). It functions in the pathway cofactor biosynthesis; thiamine diphosphate biosynthesis. Its function is as follows. Catalyzes the rearrangement of 1-deoxy-D-xylulose 5-phosphate (DXP) to produce the thiazole phosphate moiety of thiamine. Sulfur is provided by the thiocarboxylate moiety of the carrier protein ThiS. In vitro, sulfur can be provided by H(2)S. This chain is Thiazole synthase, found in Salmonella paratyphi B (strain ATCC BAA-1250 / SPB7).